A 380-amino-acid chain; its full sequence is TPR repeat-containing thioredoxin TDX (380 aa).

An N-acetylvaline modification is found at Val-2. A compositionally biased stretch (basic and acidic residues) spans 49-59 (TERDYEDKAET). A disordered region spans residues 49–115 (TERDYEDKAE…DENRDDAQSE (67 aa)). Residues 69 to 91 (DDDDDIMESDVELDNSDVVEPDN) are compositionally biased toward acidic residues. Positions 106–115 (DENRDDAQSE) are enriched in basic and acidic residues. TPR repeat units follow at residues 112–145 (AQSE…NPTS), 147–179 (ILYA…NSDS), and 181–213 (KGYK…DYDE). Positions 240–263 (RKEKELQRAERERRKQQEAQEREA) are enriched in basic and acidic residues. The tract at residues 240 to 265 (RKEKELQRAERERRKQQEAQEREAQA) is disordered. In terms of domain architecture, Thioredoxin spans 252–378 (RRKQQEAQER…LEQKIAQHSS (127 aa)). Active-site nucleophile residues include Cys-304 and Cys-307. Cys-304 and Cys-307 are disulfide-bonded.

Belongs to the thioredoxin family. Oligomerization under high temperature.

In terms of biological role, thiol-disulfide oxidoreductase that possesses insulin disulfide bonds reducing activity, disulfide reductase, foldase chaperone and holdase chaperone activities. Heat shock causes oligomerization and formation of high molecular weiht (HMW) complexes with concomitant functional switching from a disulfide reductase and foldase chaperone to a holdase chaperone. May interact with HSP70 proteins through the TPR repeats. This chain is TPR repeat-containing thioredoxin TDX (TDX), found in Arabidopsis thaliana (Mouse-ear cress).